A 103-amino-acid polypeptide reads, in one-letter code: Large ribosomal subunit protein bL21 (103 aa).

The protein belongs to the bacterial ribosomal protein bL21 family. Part of the 50S ribosomal subunit. Contacts protein L20.

Its function is as follows. This protein binds to 23S rRNA in the presence of protein L20. The protein is Large ribosomal subunit protein bL21 of Erwinia tasmaniensis (strain DSM 17950 / CFBP 7177 / CIP 109463 / NCPPB 4357 / Et1/99).